The sequence spans 629 residues: tRNA uridine 5-carboxymethylaminomethyl modification enzyme MnmG (629 aa).

FAD contacts are provided by residues 13–18 (GGGHAG), V125, and S180. Residue 273–287 (GPRYCPSIEDKVMRF) coordinates NAD(+). Q370 contributes to the FAD binding site.

It belongs to the MnmG family. As to quaternary structure, homodimer. Heterotetramer of two MnmE and two MnmG subunits. FAD is required as a cofactor.

The protein resides in the cytoplasm. In terms of biological role, NAD-binding protein involved in the addition of a carboxymethylaminomethyl (cmnm) group at the wobble position (U34) of certain tRNAs, forming tRNA-cmnm(5)s(2)U34. In Salmonella typhi, this protein is tRNA uridine 5-carboxymethylaminomethyl modification enzyme MnmG.